The chain runs to 591 residues: Dihydroxyacetone kinase 2 (591 aa).

The DhaK domain occupies 8–344 (SDGNIVTPYL…FDYPTTASGW (337 aa)). The interval 40 to 59 (ASAPNSGNPPKVSLVSGGGS) is disordered. Substrate-binding positions include 58 to 61 (GSGH), Lys-109, and Asp-114. His-223 functions as the Tele-hemiaminal-histidine intermediate in the catalytic mechanism. The 204-residue stretch at 384–587 (DTFAKILLAG…LAALLDGFVT (204 aa)) folds into the DhaL domain. ATP contacts are provided by residues 413-416 (DGDC), 459-460 (TS), 511-512 (TL), and 572-574 (DPG).

Belongs to the dihydroxyacetone kinase (DAK) family.

The catalysed reaction is dihydroxyacetone + ATP = dihydroxyacetone phosphate + ADP + H(+). The enzyme catalyses D-glyceraldehyde + ATP = D-glyceraldehyde 3-phosphate + ADP + H(+). It participates in polyol metabolism; glycerol fermentation; glycerone phosphate from glycerol (oxidative route): step 2/2. Catalyzes both the phosphorylation of dihydroxyacetone and of glyceraldehyde. In Saccharomyces cerevisiae (strain ATCC 204508 / S288c) (Baker's yeast), this protein is Dihydroxyacetone kinase 2 (DAK2).